Consider the following 665-residue polypeptide: UvrABC system protein B (665 aa).

Residues 25-178 (ASLQAEHRFQ…RQLLRDLTTI (154 aa)) enclose the Helicase ATP-binding domain. ATP is bound at residue 38 to 45 (GATGTGKT). Positions 91–114 (YYDYYQPEAYIPVTDTYIEKTAAI) match the Beta-hairpin motif. The 167-residue stretch at 429–595 (QVDDLLGEVR…PIVKKASNAI (167 aa)) folds into the Helicase C-terminal domain. One can recognise a UVR domain in the interval 626-661 (PELITQLEAQMKEAAKKLEFEEAAKYRDRIKQLRDK).

It belongs to the UvrB family. As to quaternary structure, forms a heterotetramer with UvrA during the search for lesions. Interacts with UvrC in an incision complex.

The protein localises to the cytoplasm. In terms of biological role, the UvrABC repair system catalyzes the recognition and processing of DNA lesions. A damage recognition complex composed of 2 UvrA and 2 UvrB subunits scans DNA for abnormalities. Upon binding of the UvrA(2)B(2) complex to a putative damaged site, the DNA wraps around one UvrB monomer. DNA wrap is dependent on ATP binding by UvrB and probably causes local melting of the DNA helix, facilitating insertion of UvrB beta-hairpin between the DNA strands. Then UvrB probes one DNA strand for the presence of a lesion. If a lesion is found the UvrA subunits dissociate and the UvrB-DNA preincision complex is formed. This complex is subsequently bound by UvrC and the second UvrB is released. If no lesion is found, the DNA wraps around the other UvrB subunit that will check the other stand for damage. This Cyanothece sp. (strain PCC 7425 / ATCC 29141) protein is UvrABC system protein B.